A 435-amino-acid chain; its full sequence is Serine--tRNA ligase (435 aa).

241–243 provides a ligand contact to L-serine; the sequence is TAE. 272–274 contributes to the ATP binding site; it reads RSE. Glu-295 serves as a coordination point for L-serine. 359-362 is an ATP binding site; sequence EISS. Position 395 (Ser-395) interacts with L-serine.

Belongs to the class-II aminoacyl-tRNA synthetase family. Type-1 seryl-tRNA synthetase subfamily. In terms of assembly, homodimer. The tRNA molecule binds across the dimer.

Its subcellular location is the cytoplasm. It carries out the reaction tRNA(Ser) + L-serine + ATP = L-seryl-tRNA(Ser) + AMP + diphosphate + H(+). The enzyme catalyses tRNA(Sec) + L-serine + ATP = L-seryl-tRNA(Sec) + AMP + diphosphate + H(+). It functions in the pathway aminoacyl-tRNA biosynthesis; selenocysteinyl-tRNA(Sec) biosynthesis; L-seryl-tRNA(Sec) from L-serine and tRNA(Sec): step 1/1. Functionally, catalyzes the attachment of serine to tRNA(Ser). Is also able to aminoacylate tRNA(Sec) with serine, to form the misacylated tRNA L-seryl-tRNA(Sec), which will be further converted into selenocysteinyl-tRNA(Sec). This Actinobacillus pleuropneumoniae serotype 7 (strain AP76) protein is Serine--tRNA ligase.